The following is a 90-amino-acid chain: Serine protease inhibitor kazal-like protein, minor form (90 aa).

Residues 1 to 23 (MSSTWIKFLFILTLVLLPYSVFS) form the signal peptide. In terms of domain architecture, Kazal-like spans 33–89 (VIKEPNCTMYKSKSECSNIAENPVCADDRNTYYNECYFCIEKVVEKLKYRYHGICIY). The N-linked (GlcNAc...) asparagine glycan is linked to asparagine 38.

Luminal fluid and mucosal folds of the seminal vesicles (at protein level). Not detected in brain, heart, lung, liver, kidney, stomach, small intestine, muscle, skin, thymus, placenta or bladder.

It localises to the secreted. In terms of biological role, does not function as an inhibitor of trypsin, chymotrypsin, subtilisin or elastase. Binds sperm and enhances sperm motility. May act as a decapacitation factor, suppresses BSA-stimulated sperm capacitation and blocks sperm-oocyte interactions in vitro. This is Serine protease inhibitor kazal-like protein, minor form (Spinkl) from Mus musculus (Mouse).